We begin with the raw amino-acid sequence, 245 residues long: UDP-2,3-diacylglucosamine hydrolase (245 aa).

Positions 8, 10, 41, 80, and 115 each coordinate Mn(2+). 80–81 (NR) contacts substrate. Substrate is bound by residues aspartate 123, serine 161, lysine 165, lysine 168, and histidine 196. Mn(2+) is bound by residues histidine 196 and histidine 198.

Belongs to the LpxH family. The cofactor is Mn(2+).

The protein localises to the cell inner membrane. It carries out the reaction UDP-2-N,3-O-bis[(3R)-3-hydroxytetradecanoyl]-alpha-D-glucosamine + H2O = 2-N,3-O-bis[(3R)-3-hydroxytetradecanoyl]-alpha-D-glucosaminyl 1-phosphate + UMP + 2 H(+). The protein operates within glycolipid biosynthesis; lipid IV(A) biosynthesis; lipid IV(A) from (3R)-3-hydroxytetradecanoyl-[acyl-carrier-protein] and UDP-N-acetyl-alpha-D-glucosamine: step 4/6. In terms of biological role, hydrolyzes the pyrophosphate bond of UDP-2,3-diacylglucosamine to yield 2,3-diacylglucosamine 1-phosphate (lipid X) and UMP by catalyzing the attack of water at the alpha-P atom. Involved in the biosynthesis of lipid A, a phosphorylated glycolipid that anchors the lipopolysaccharide to the outer membrane of the cell. The protein is UDP-2,3-diacylglucosamine hydrolase of Psychromonas ingrahamii (strain DSM 17664 / CCUG 51855 / 37).